A 735-amino-acid polypeptide reads, in one-letter code: MNGDTRAAVVTSPPPTTAPHKERYFDRVDENNPEYLRERNMAPDLRQDFNMMEQKKRVSMILQSPAFCEELESMIQEQFKKGKNPTGLLALQQIADFMTASVPNVYPAAPQGGMAALNMSLGMVTPVNDLRGSDSIAYDKGEKLLRCKLAAFYRLADLFGWSQLIYNHITTRVNSEQEHFLIVPFGLLYSEVTASSLVKVNLQGDIVDRGSTNLGVNQAGFTLHSAVYAARPDAKCIVHIHTPAGAAVSAMKCGLLPISPEALSLGDVAYHDYHGILVDEEEKILIQKNLGPKSKVLILRNHGLVSVGESVEEAFYYIHNLVVACEIQVRTLASAGGPDNLVLLDPGKYKAKSRSPGTPAGEGSGSPPKWQIGEQEFEALMRMLDNLGYRTGYPYRYPALRERSKKYSDVEVPASVTGHSFASDGDSGTCSPLRHSFQKQQREKTRWLHSGRGDDASEEGQNGSSPKSKTKWTKEDGHRTSTSAVPNLFVPLNTNPKEVQEMRNKIREQNLQDIKTAGPQSQVLCGVMMDRSLVQGELVTASKAIIEKEYQPHVIVSTTGPNPFNTLTDRELEEYRREVERKQKGSEENLDETREQKEKSPPDQSAVPNTPPSTPVKLEEDLPQEPTSRDDSDATTFKPTPPDLSPDEPSEALAFPAVEEEAHASPDPTQPPAEADPEPASAPTPGAEEVASPATEEGSPMDPGSDGSPGKSPSKKKKKFRTPSFLKKSKKKSDS.

Residue Met1 is modified to N-acetylmethionine. A compositionally biased stretch (low complexity) spans Met1 to Thr11. Positions Met1 to Lys21 are disordered. Ser12, Ser59, and Ser64 each carry phosphoserine. Thr331 bears the Phosphothreonine mark. Phosphoserine occurs at positions 334, 353, and 355. Phosphothreonine is present on Thr358. 4 positions are modified to phosphoserine: Ser364, Ser366, Ser408, and Ser427. 2 disordered regions span residues Gly418–Asn487 and Arg576–Ser735. Residue Thr429 is modified to Phosphothreonine. A phosphoserine mark is found at Ser431 and Ser436. Residues Gln440–Asp455 show a composition bias toward basic and acidic residues. Thr445 is subject to Phosphothreonine; by ROCK2. Phosphoserine is present on residues Ser464 and Ser465. Thr480 bears the Phosphothreonine; by ROCK2 mark. The residue at position 481 (Ser481) is a Phosphoserine; by PKA. Residues Arg576–Pro601 are compositionally biased toward basic and acidic residues. Phosphoserine occurs at positions 586, 600, and 605. Thr610 carries the post-translational modification Phosphothreonine. The residue at position 613 (Ser613) is a Phosphoserine. Phosphothreonine is present on Thr614. The span at Gly698–Ser712 shows a compositional bias: low complexity. A phosphoserine mark is found at Ser705, Ser708, and Ser712. A compositionally biased stretch (basic residues) spans Pro713–Ser735. Residue Ser714 is modified to Phosphoserine; by PKC. The tract at residues Lys715–Lys732 is interaction with calmodulin. At Ser724 the chain carries Phosphoserine; by PKA and PKC.

It belongs to the aldolase class II family. Adducin subfamily. Heterodimer of an alpha and a beta subunit or an alpha and a gamma subunit.

The protein resides in the cytoplasm. The protein localises to the cytoskeleton. It localises to the cell membrane. In terms of biological role, membrane-cytoskeleton-associated protein that promotes the assembly of the spectrin-actin network. Binds to calmodulin. This Mus musculus (Mouse) protein is Alpha-adducin (Add1).